Reading from the N-terminus, the 138-residue chain is Large ribosomal subunit protein uL16 (138 aa).

The segment covering 1 to 13 (MLQPKRRKYRKEQ) has biased composition (basic residues). Positions 1 to 24 (MLQPKRRKYRKEQKGRNTGKATRG) are disordered.

Belongs to the universal ribosomal protein uL16 family. In terms of assembly, part of the 50S ribosomal subunit.

In terms of biological role, binds 23S rRNA and is also seen to make contacts with the A and possibly P site tRNAs. The polypeptide is Large ribosomal subunit protein uL16 (Burkholderia ambifaria (strain ATCC BAA-244 / DSM 16087 / CCUG 44356 / LMG 19182 / AMMD) (Burkholderia cepacia (strain AMMD))).